A 200-amino-acid polypeptide reads, in one-letter code: Adenine phosphoribosyltransferase (200 aa).

This sequence belongs to the purine/pyrimidine phosphoribosyltransferase family. In terms of assembly, homodimer.

It is found in the cytoplasm. It carries out the reaction AMP + diphosphate = 5-phospho-alpha-D-ribose 1-diphosphate + adenine. It participates in purine metabolism; AMP biosynthesis via salvage pathway; AMP from adenine: step 1/1. Its function is as follows. Catalyzes a salvage reaction resulting in the formation of AMP, that is energically less costly than de novo synthesis. This is Adenine phosphoribosyltransferase from Sorangium cellulosum (strain So ce56) (Polyangium cellulosum (strain So ce56)).